A 347-amino-acid chain; its full sequence is S-adenosylmethionine decarboxylase proenzyme (347 aa).

Catalysis depends on residues Glu-10 and Glu-13. Ser-66 serves as the catalytic Schiff-base intermediate with substrate; via pyruvic acid. Residue Ser-66 is modified to Pyruvic acid (Ser); by autocatalysis. Catalysis depends on Cys-80, which acts as the Proton donor; for catalytic activity. Catalysis depends on proton acceptor; for processing activity residues Ser-237 and His-251.

It belongs to the eukaryotic AdoMetDC family. Pyruvate is required as a cofactor. Post-translationally, is synthesized initially as an inactive proenzyme. Formation of the active enzyme involves a self-maturation process in which the active site pyruvoyl group is generated from an internal serine residue via an autocatalytic post-translational modification. Two non-identical subunits are generated from the proenzyme in this reaction, and the pyruvate is formed at the N-terminus of the alpha chain, which is derived from the carboxyl end of the proenzyme. The post-translation cleavage follows an unusual pathway, termed non-hydrolytic serinolysis, in which the side chain hydroxyl group of the serine supplies its oxygen atom to form the C-terminus of the beta chain, while the remainder of the serine residue undergoes an oxidative deamination to produce ammonia and the pyruvoyl group blocking the N-terminus of the alpha chain.

The catalysed reaction is S-adenosyl-L-methionine + H(+) = S-adenosyl 3-(methylsulfanyl)propylamine + CO2. Its pathway is amine and polyamine biosynthesis; S-adenosylmethioninamine biosynthesis; S-adenosylmethioninamine from S-adenosyl-L-methionine: step 1/1. The polypeptide is S-adenosylmethionine decarboxylase proenzyme (SamDC) (Drosophila melanogaster (Fruit fly)).